A 108-amino-acid polypeptide reads, in one-letter code: uncharacterized protein (108 aa).

A helical transmembrane segment spans residues 59-81 (NIVIILWKIMVVIISSIIHRTYI).

It localises to the membrane. This is an uncharacterized protein from Rickettsia conorii (strain ATCC VR-613 / Malish 7).